Reading from the N-terminus, the 319-residue chain is Ferrochelatase (319 aa).

H192 and E271 together coordinate Fe cation.

Belongs to the ferrochelatase family.

The protein localises to the cytoplasm. The catalysed reaction is heme b + 2 H(+) = protoporphyrin IX + Fe(2+). Its pathway is porphyrin-containing compound metabolism; protoheme biosynthesis; protoheme from protoporphyrin-IX: step 1/1. Its function is as follows. Catalyzes the ferrous insertion into protoporphyrin IX. In Geotalea uraniireducens (strain Rf4) (Geobacter uraniireducens), this protein is Ferrochelatase.